The following is a 296-amino-acid chain: Iron(3+)-hydroxamate-binding protein FhuD (296 aa).

Residues 1–30 (MSGLPLISRRRLLTAMALSPLLWQMNTAHA) constitute a signal peptide (tat-type signal). The Fe/B12 periplasmic-binding domain maps to 37–296 (RIVALEWLPV…VLDNAIGGKA (260 aa)). Tryptophan 68, arginine 84, serine 103, tyrosine 106, phenylalanine 124, tryptophan 217, tryptophan 273, phenylalanine 274, and tyrosine 275 together coordinate Fe(III)-coprogen.

The protein belongs to the bacterial solute-binding protein 8 family. As to quaternary structure, the complex is composed of two ATP-binding proteins (FhuC), a transmembrane protein (FhuB) and a solute-binding protein (FhuD). FhuD interacts with FhuB. Substrate-loaded FhuD binds FhuB more strongly than FhuD alone. Exported by the Tat system. The position of the signal peptide cleavage has been experimentally proven. Can also be exported by the Sec system.

Its subcellular location is the periplasm. Part of the ABC transporter complex FhuCDB involved in iron(3+)-hydroxamate import. Binds the iron(3+)-hydroxamate complex and transfers it to the membrane-bound permease. Required for the transport of all iron(3+)-hydroxamate siderophores such as ferrichrome, gallichrome, desferrioxamine, coprogen, aerobactin, shizokinen, rhodotorulic acid and the antibiotic albomycin. The protein is Iron(3+)-hydroxamate-binding protein FhuD (fhuD) of Escherichia coli (strain K12).